We begin with the raw amino-acid sequence, 71 residues long: Protein KleB (71 aa).

A DNA-binding region (H-T-H motif) is located at residues isoleucine 9 to isoleucine 28.

The chain is Protein KleB (kleB) from Escherichia coli.